Consider the following 937-residue polypeptide: Protein SEY1 homolog (937 aa).

At 1 to 848 (MEKGVEKTQI…ETGSKMSLKN (848 aa)) the chain is on the cytoplasmic side. The GB1/RHD3-type G domain maps to 34-280 (GFSYNVIAVL…IPSDGFAQYC (247 aa)). Residue 44–51 (GSQSSGKS) coordinates GTP. 2 coiled-coil regions span residues 319-339 (NKEI…NFKE) and 725-750 (YLDE…IIIQ). Residues 849–869 (VPVVFWIILLLFGWNEILFFI) form a helical membrane-spanning segment. Residues 870–872 (RMF) are Lumenal-facing. Residues 873 to 893 (FKLNVILPLFFAAAFIVSTFV) traverse the membrane as a helical segment. The Cytoplasmic portion of the chain corresponds to 894-937 (YNGNTQALSYINKIIFYMAKNSYNFFKHIQAISNPPPKNVQKQE).

This sequence belongs to the TRAFAC class dynamin-like GTPase superfamily. GB1/RHD3 GTPase family. RHD3 subfamily.

The protein localises to the endoplasmic reticulum membrane. Functionally, probable GTP-binding protein involved in generating and maintaining the structure of the tubular endoplasmic reticulum network. The protein is Protein SEY1 homolog of Plasmodium falciparum (isolate 3D7).